The chain runs to 606 residues: NADH-ubiquinone oxidoreductase chain 5 (606 aa).

A run of 16 helical transmembrane segments spans residues 3–23 (LFTS…LMSL), 35–55 (YVKT…LIFI), 87–107 (MIFT…SMWY), 117–137 (FFKY…ANNL), 140–160 (LFIG…WWYG), 171–191 (AILY…WFLF), 211–233 (LPLL…HPWL), 241–261 (TPVS…FLLI), 273–293 (MQTL…ICAL), 301–320 (IIAF…IGIN), 325–347 (AFLH…GSII), 366–386 (LPFT…TPFL), 402–422 (SYTN…TAVY), 457–477 (LLIG…PMTI), 488–508 (LTAL…SLMT), and 582–602 (GLIK…MLLF).

Belongs to the complex I subunit 5 family. As to quaternary structure, core subunit of respiratory chain NADH dehydrogenase (Complex I) which is composed of 45 different subunits.

The protein localises to the mitochondrion inner membrane. The catalysed reaction is a ubiquinone + NADH + 5 H(+)(in) = a ubiquinol + NAD(+) + 4 H(+)(out). Its function is as follows. Core subunit of the mitochondrial membrane respiratory chain NADH dehydrogenase (Complex I) which catalyzes electron transfer from NADH through the respiratory chain, using ubiquinone as an electron acceptor. Essential for the catalytic activity and assembly of complex I. The sequence is that of NADH-ubiquinone oxidoreductase chain 5 (MT-ND5) from Pseudosoriculus fumidus (Taiwanese brown-toothed shrew).